We begin with the raw amino-acid sequence, 214 residues long: tRNA (guanine-N(7)-)-methyltransferase (214 aa).

4 residues coordinate S-adenosyl-L-methionine: Glu43, Glu68, Asp95, and Asp117. Asp117 is a catalytic residue. Residues Lys121, Asp153, and 190–193 (TEYE) contribute to the substrate site.

Belongs to the class I-like SAM-binding methyltransferase superfamily. TrmB family.

It carries out the reaction guanosine(46) in tRNA + S-adenosyl-L-methionine = N(7)-methylguanosine(46) in tRNA + S-adenosyl-L-homocysteine. It participates in tRNA modification; N(7)-methylguanine-tRNA biosynthesis. Catalyzes the formation of N(7)-methylguanine at position 46 (m7G46) in tRNA. This is tRNA (guanine-N(7)-)-methyltransferase from Staphylococcus aureus (strain MSSA476).